An 85-amino-acid chain; its full sequence is U4-theraphotoxin-Hhn1i (85 aa).

The N-terminal stretch at M1 to A22 is a signal peptide. A propeptide spanning residues E23–R48 is cleaved from the precursor. Intrachain disulfides connect C52–C66, C56–C77, and C71–C82.

It belongs to the neurotoxin 12 (Hwtx-2) family. 02 (Hwtx-2) subfamily. In terms of tissue distribution, expressed by the venom gland.

It localises to the secreted. In terms of biological role, postsynaptic neurotoxin. This Cyriopagopus hainanus (Chinese bird spider) protein is U4-theraphotoxin-Hhn1i.